Here is a 193-residue protein sequence, read N- to C-terminus: Potassium-transporting ATPase KdpC subunit (193 aa).

Residues 10–30 (AAIIIFSVLTGVIYPALVTVI) form a helical membrane-spanning segment.

This sequence belongs to the KdpC family. The system is composed of three essential subunits: KdpA, KdpB and KdpC.

The protein localises to the cell membrane. Part of the high-affinity ATP-driven potassium transport (or Kdp) system, which catalyzes the hydrolysis of ATP coupled with the electrogenic transport of potassium into the cytoplasm. This subunit acts as a catalytic chaperone that increases the ATP-binding affinity of the ATP-hydrolyzing subunit KdpB by the formation of a transient KdpB/KdpC/ATP ternary complex. This is Potassium-transporting ATPase KdpC subunit from Herpetosiphon aurantiacus (strain ATCC 23779 / DSM 785 / 114-95).